Consider the following 415-residue polypeptide: Serine hydroxymethyltransferase (415 aa).

Residues Leu-115 and 119 to 121 (GHL) each bind (6S)-5,6,7,8-tetrahydrofolate. Lys-224 carries the post-translational modification N6-(pyridoxal phosphate)lysine. 348–350 (SPF) is a (6S)-5,6,7,8-tetrahydrofolate binding site.

Belongs to the SHMT family. Homodimer. Pyridoxal 5'-phosphate serves as cofactor.

The protein localises to the cytoplasm. The catalysed reaction is (6R)-5,10-methylene-5,6,7,8-tetrahydrofolate + glycine + H2O = (6S)-5,6,7,8-tetrahydrofolate + L-serine. The protein operates within one-carbon metabolism; tetrahydrofolate interconversion. It functions in the pathway amino-acid biosynthesis; glycine biosynthesis; glycine from L-serine: step 1/1. Functionally, catalyzes the reversible interconversion of serine and glycine with tetrahydrofolate (THF) serving as the one-carbon carrier. This reaction serves as the major source of one-carbon groups required for the biosynthesis of purines, thymidylate, methionine, and other important biomolecules. Also exhibits THF-independent aldolase activity toward beta-hydroxyamino acids, producing glycine and aldehydes, via a retro-aldol mechanism. The sequence is that of Serine hydroxymethyltransferase from Latilactobacillus sakei subsp. sakei (strain 23K) (Lactobacillus sakei subsp. sakei).